Reading from the N-terminus, the 51-residue chain is Putative ribosomal protein eL39-like 5 (51 aa).

The protein belongs to the eukaryotic ribosomal protein eL39 family.

The sequence is that of Putative ribosomal protein eL39-like 5 (RPL39P5) from Homo sapiens (Human).